The primary structure comprises 260 residues: Triosephosphate isomerase (260 aa).

N11 to K13 provides a ligand contact to substrate. Residue H103 is the Electrophile of the active site. Residue E175 is the Proton acceptor of the active site. Residues G181, S220, and G241–G242 contribute to the substrate site.

It belongs to the triosephosphate isomerase family. In terms of assembly, homodimer.

It localises to the cytoplasm. The enzyme catalyses D-glyceraldehyde 3-phosphate = dihydroxyacetone phosphate. The protein operates within carbohydrate biosynthesis; gluconeogenesis. Its pathway is carbohydrate degradation; glycolysis; D-glyceraldehyde 3-phosphate from glycerone phosphate: step 1/1. Its function is as follows. Involved in the gluconeogenesis. Catalyzes stereospecifically the conversion of dihydroxyacetone phosphate (DHAP) to D-glyceraldehyde-3-phosphate (G3P). The sequence is that of Triosephosphate isomerase from Shewanella denitrificans (strain OS217 / ATCC BAA-1090 / DSM 15013).